Reading from the N-terminus, the 98-residue chain is MPRSLKKGPFIESKLEKRIAALNSKDEKKVVKTWSRSSMIAPEFVGHTIAVHNGKSHIPVYVSENMVGHKLGEFAPTRTYRGHAGGKSEKGGSAPRKK.

The disordered stretch occupies residues Thr77 to Lys98.

It belongs to the universal ribosomal protein uS19 family.

Its function is as follows. Protein S19 forms a complex with S13 that binds strongly to the 16S ribosomal RNA. The chain is Small ribosomal subunit protein uS19 from Chlorobium phaeobacteroides (strain BS1).